Here is a 490-residue protein sequence, read N- to C-terminus: MERGRGMGKTALLAVLCLCLRGAAGSDPEAEMNFEGIESKFSLRTPAEPDEDVCYLVPGQMDSLAQCNFNHTSKTFVVIHGWTVTGMYESWVPKLVDALYKREPDSNVIVVDWLVRAQQHYPVSAAYTKLVGKDVAMFIDWMEEKFNYPLNNVHLLGYSLGAHAAGIAGSLTKKKVNRITGLDPAGPTFEYADAPIRLSPDDADFVDVLHTYTRGSPDRSIGIQKPVGHIDIYPNGGGFQPGCNLGEALRLIAEKGFSDVDQLVKCSHERSIHLFIDSLLYEEKPSMAYRCNTKEAFEKGLCLSCRKNRCNNLGYKVNRVRTKRNTKMYLKTRAQMPYKVFHYQVKIHFFGKTNVTKVDQPFLISLYGTLDESENIPFTLPEVSSNKTFSFLIYTEVDIGDLLMLKLQWEKDTFFSWSDWWTPFAFTIQRVRVKSGETQKKVVFCSRDGSSRLGKGEEAAIFVKCLEQPVSRKRGGAKKASKENSAHESA.

Positions 1 to 25 (MERGRGMGKTALLAVLCLCLRGAAG) are cleaved as a signal peptide. Residues 32 to 53 (MNFEGIESKFSLRTPAEPDEDV) are interaction with GPIHBP1. A disulfide bridge links Cys-54 with Cys-67. N-linked (GlcNAc...) (complex) asparagine glycosylation is present at Asn-70. Tyr-121 carries the post-translational modification 3'-nitrotyrosine. Residue Ser-159 is the Nucleophile of the active site. The Charge relay system role is filled by Asp-183. Tyr-191 carries the post-translational modification 3'-nitrotyrosine. Ca(2+)-binding residues include Ala-194, Arg-197, Ser-199, and Asp-202. An intrachain disulfide couples Cys-243 to Cys-266. The essential for determining substrate specificity stretch occupies residues 243–266 (CNLGEALRLIAEKGFSDVDQLVKC). His-268 serves as the catalytic Charge relay system. 2 disulfide bridges follow: Cys-291–Cys-310 and Cys-302–Cys-305. Residues 341–464 (FHYQVKIHFF…KGEEAAIFVK (124 aa)) form the PLAT domain. The residue at position 343 (Tyr-343) is a 3'-nitrotyrosine. 2 N-linked (GlcNAc...) asparagine glycosylation sites follow: Asn-354 and Asn-386. An important for interaction with lipoprotein particles region spans residues 417–421 (WSDWW). The interval 430-434 (RVRVK) is important for heparin binding. 430 to 441 (RVRVKSGETQKK) contributes to the heparin binding site. Residues 443-467 (VFCSRDGSSRLGKGEEAAIFVKCLE) are interaction with GPIHBP1. Residues Cys-445 and Cys-465 are joined by a disulfide bond. The segment at 471-490 (SRKRGGAKKASKENSAHESA) is disordered. Basic and acidic residues predominate over residues 480 to 490 (ASKENSAHESA).

This sequence belongs to the AB hydrolase superfamily. Lipase family. As to quaternary structure, homodimer. Interacts with GPIHBP1 with 1:1 stoichiometry. Interacts with APOC2; the interaction activates LPL activity in the presence of lipids. Interaction with heparan sulfate proteoglycans is required to protect LPL against loss of activity. Associates with lipoprotein particles in blood plasma. Interacts with LMF1 and SEL1L; interaction with SEL1L is required to prevent aggregation of newly synthesized LPL in the endoplasmic reticulum (ER), and for normal export of LPL from the ER to the extracellular space. Post-translationally, N-glycan at Asn-70 is a triantennary complex oligosaccharide containing sialic acid, galactose, mannose, and N-acetylglucosamine, the reducing GlcNAc being sulfated at C6. Tyrosine nitration after lipopolysaccharide (LPS) challenge down-regulates the lipase activity.

The protein resides in the cell membrane. It is found in the secreted. The protein localises to the extracellular space. It localises to the extracellular matrix. It catalyses the reaction a triacylglycerol + H2O = a diacylglycerol + a fatty acid + H(+). It carries out the reaction a 1,2-diacyl-sn-glycero-3-phosphocholine + H2O = a 2-acyl-sn-glycero-3-phosphocholine + a fatty acid + H(+). The enzyme catalyses 1,2,3-tri-(9Z-octadecenoyl)-glycerol + H2O = di-(9Z)-octadecenoylglycerol + (9Z)-octadecenoate + H(+). The catalysed reaction is 1,2-di-(9Z-octadecenoyl)-sn-glycero-3-phosphocholine + H2O = (9Z-octadecenoyl)-sn-glycero-3-phosphocholine + (9Z)-octadecenoate + H(+). It catalyses the reaction 1,2,3-tributanoylglycerol + H2O = dibutanoylglycerol + butanoate + H(+). It carries out the reaction 1,2-dihexadecanoyl-sn-glycero-3-phosphocholine + H2O = hexadecanoyl-sn-glycero-3-phosphocholine + hexadecanoate + H(+). Ca(2+) binding promotes protein stability and formation of the active homodimer. Its function is as follows. Key enzyme in triglyceride metabolism. Catalyzes the hydrolysis of triglycerides from circulating chylomicrons and very low density lipoproteins (VLDL), and thereby plays an important role in lipid clearance from the blood stream, lipid utilization and storage. Although it has both phospholipase and triglyceride lipase activities it is primarily a triglyceride lipase with low but detectable phospholipase activity. Mediates margination of triglyceride-rich lipoprotein particles in capillaries. Recruited to its site of action on the luminal surface of vascular endothelium by binding to GPIHBP1 and cell surface heparan sulfate proteoglycans. The protein is Lipoprotein lipase (LPL) of Gallus gallus (Chicken).